A 239-amino-acid chain; its full sequence is Orotidine 5'-phosphate decarboxylase (239 aa).

Substrate is bound by residues Asp10, Lys32, 59–68 (DLKLHDIPNT), Thr122, Arg184, Gln193, Gly213, and Arg214. Residue Lys61 is the Proton donor of the active site.

Belongs to the OMP decarboxylase family. Type 1 subfamily. Homodimer.

The catalysed reaction is orotidine 5'-phosphate + H(+) = UMP + CO2. Its pathway is pyrimidine metabolism; UMP biosynthesis via de novo pathway; UMP from orotate: step 2/2. Its function is as follows. Catalyzes the decarboxylation of orotidine 5'-monophosphate (OMP) to uridine 5'-monophosphate (UMP). The polypeptide is Orotidine 5'-phosphate decarboxylase (Shouchella clausii (strain KSM-K16) (Alkalihalobacillus clausii)).